The sequence spans 401 residues: 3-hydroxyisobutyryl-CoA hydrolase-like protein 1, mitochondrial (401 aa).

Residues 1–26 (MHNAKGLLGRIVRDKLWRFGYRRSLC) constitute a mitochondrion transit peptide.

It belongs to the enoyl-CoA hydratase/isomerase family.

It localises to the mitochondrion. The chain is 3-hydroxyisobutyryl-CoA hydrolase-like protein 1, mitochondrial from Arabidopsis thaliana (Mouse-ear cress).